We begin with the raw amino-acid sequence, 244 residues long: Cobalt transport protein CbiM (244 aa).

The N-terminal stretch at 1–28 (MKKLWKFIPFVLMGVIYFTLTNPESAHA) is a signal peptide. The next 6 membrane-spanning stretches (helical) occupy residues 37 to 57 (PVKW…LGLI), 71 to 91 (LLLA…IPSV), 103 to 123 (LATV…VLLF), 135 to 155 (TLGA…FVVY), 166 to 186 (SVSI…TTSV), and 206 to 226 (FMAI…LLTV).

It belongs to the CbiM family. Forms an energy-coupling factor (ECF) transporter complex composed of an ATP-binding protein (A component, CbiO), a transmembrane protein (T component, CbiQ) and 2 possible substrate-capture proteins (S components, CbiM and CbiN) of unknown stoichimetry.

The protein localises to the cell membrane. It functions in the pathway cofactor biosynthesis; adenosylcobalamin biosynthesis. Its function is as follows. Part of the energy-coupling factor (ECF) transporter complex CbiMNOQ involved in cobalt import. This is Cobalt transport protein CbiM from Listeria seeligeri serovar 1/2b (strain ATCC 35967 / DSM 20751 / CCM 3970 / CCUG 15530 / CIP 100100 / LMG 11386 / NCTC 11856 / SLCC 3954 / 1120).